The following is a 186-amino-acid chain: Agglutinin isolectin 3 (186 aa).

Pyrrolidone carboxylic acid is present on Gln-1. Chitin-binding type-1 domains lie at 1–42, 43–85, 86–128, and 129–171; these read QRCG…ACWT, SKRC…PCRA, DIKC…ACST, and DKPC…GCDG. 16 disulfide bridges follow: Cys-3–Cys-18, Cys-12–Cys-24, Cys-17–Cys-31, Cys-35–Cys-40, Cys-46–Cys-61, Cys-55–Cys-67, Cys-60–Cys-74, Cys-78–Cys-83, Cys-89–Cys-104, Cys-98–Cys-110, Cys-103–Cys-117, Cys-121–Cys-126, Cys-132–Cys-147, Cys-141–Cys-153, Cys-146–Cys-160, and Cys-164–Cys-169. A substrate-binding site is contributed by 10 to 12; sequence MEC. 62–73 contributes to the substrate binding site; sequence SQYGHCGFGAEY. Residue 114–115 coordinates substrate; it reads SE. Residues 172–186 constitute a propeptide that is removed on maturation; the sequence is VFAEAIATNSTLLAE. Asn-180 carries N-linked (GlcNAc...) asparagine glycosylation.

Homodimer, u-shaped.

Its function is as follows. N-acetyl-D-glucosamine / N-acetyl-D-neuraminic acid binding lectin. This chain is Agglutinin isolectin 3, found in Triticum aestivum (Wheat).